Consider the following 147-residue polypeptide: Histone-lysine N-methyltransferase, H3 lysine-37 specific (147 aa).

In terms of domain architecture, SET spans 8–116 (SPLEIRDTER…TNEELCISYG (109 aa)).

This sequence belongs to the class V-like SAM-binding methyltransferase superfamily. As to quaternary structure, homodimer.

It localises to the cytoplasm. Its subcellular location is the nucleus. The enzyme catalyses L-lysyl(37)-[histone H3] + S-adenosyl-L-methionine = N(6)-methyl-L-lysyl(37)-[histone H3] + S-adenosyl-L-homocysteine + H(+). It catalyses the reaction N(6)-methyl-L-lysyl(37)-[histone H3] + S-adenosyl-L-methionine = N(6),N(6)-dimethyl-L-lysyl(37)-[histone H3] + S-adenosyl-L-homocysteine + H(+). The catalysed reaction is N(6),N(6)-dimethyl-L-lysyl(37)-[histone H3] + S-adenosyl-L-methionine = N(6),N(6),N(6)-trimethyl-L-lysyl(37)-[histone H3] + S-adenosyl-L-homocysteine + H(+). In terms of biological role, histone lysine methyltransferase that specifically mono-, di-, and trimethylates 'Lys-37' of histone H3 to regulate sporulation. This is Histone-lysine N-methyltransferase, H3 lysine-37 specific from Schizosaccharomyces pombe (strain 972 / ATCC 24843) (Fission yeast).